The primary structure comprises 25 residues: Ocellatin-L2 (25 aa).

The residue at position 25 (Leu-25) is a Leucine amide.

This sequence belongs to the frog skin active peptide (FSAP) family. Ocellatin subfamily. As to expression, expressed by the skin glands.

Its subcellular location is the secreted. Its function is as follows. Shows a low activity in stimulating insulin release from rat BRIN-BD11 beta cells, and acts without loss of integrity of the plasma membrane. Does not show antibacterial (E.coli and S.aureus). Does not show hemolytic activity against human erythrocytes. The sequence is that of Ocellatin-L2 from Leptodactylus laticeps (Santa Fe frog).